The following is a 393-amino-acid chain: Short chain dehydrogenase sirQ (393 aa).

An NADP(+)-binding site is contributed by L54. S233 serves as the catalytic Proton donor. Catalysis depends on K259, which acts as the Lowers pKa of active site Tyr. A286 is a binding site for NADP(+).

It belongs to the short-chain dehydrogenases/reductases (SDR) family. Highly divergent.

It participates in mycotoxin biosynthesis. Its function is as follows. Short chain dehydrogenase; part of the gene cluster that mediates the biosynthesis of sirodesmin PL, an epipolythiodioxopiperazine (ETP) characterized by a disulfide bridged cyclic dipeptide and that acts as a phytotoxin which is involved in the blackleg didease of canola. SirD catalyzes the O-prenylation of L-tyrosine (L-Tyr) in the presence of dimethylallyl diphosphate (DMAPP) to yield 4-O-dimethylallyl-L-Tyr, and therefore represents probably the first pathway-specific enzyme in the biosynthesis of sirodesmin PL. 4-O-dimethylallyl-L-Tyr, then undergoes condensation with L-Ser in a reaction catalyzed by the non-ribosomal peptide synthase sirP to form the diketopiperazine (DKP) backbone. Further bishydroxylation of the DKP performed by the cytochrome P450 monooxygenase sirC leads to the production of the intermediate phomamide. This step is essential to form the reactive thiol group required for toxicity of sirodesmin PL. The next steps of sirodesmin biosynthesis are not well understood yet, but some predictions could be made from intermediate compounds identification. Phomamide is converted into phomalizarine via oxidation, probably by sirT. Further oxidation, methylation (by sirM or sirN) and reduction steps convert phomalizarine to deacetyl sirodesmin. Finally, acetyltransferase sirH probably acetylates deacetyl sirodesmin to produce sirodesmin PL. The protein is Short chain dehydrogenase sirQ of Leptosphaeria maculans (Blackleg fungus).